The chain runs to 618 residues: Glutamine--fructose-6-phosphate aminotransferase [isomerizing] (618 aa).

C2 (nucleophile; for GATase activity) is an active-site residue. The 225-residue stretch at 2–226 (CGIVGYAGRN…DFETAVLTPD (225 aa)) folds into the Glutamine amidotransferase type-2 domain. A disordered region spans residues 72-91 (WATHGRPSTENAHPHNSGGN). 2 consecutive SIS domains span residues 295-434 (NDDE…VRGK) and 467-608 (CAEN…IDKP). The active-site For Fru-6P isomerization activity is the K613.

As to quaternary structure, homodimer.

The protein localises to the cytoplasm. The catalysed reaction is D-fructose 6-phosphate + L-glutamine = D-glucosamine 6-phosphate + L-glutamate. Functionally, catalyzes the first step in hexosamine metabolism, converting fructose-6P into glucosamine-6P using glutamine as a nitrogen source. This is Glutamine--fructose-6-phosphate aminotransferase [isomerizing] from Methanosarcina mazei (strain ATCC BAA-159 / DSM 3647 / Goe1 / Go1 / JCM 11833 / OCM 88) (Methanosarcina frisia).